The primary structure comprises 342 residues: MPVNLKGRSLDSLLNFTTEEVQHLIDLSIDLKKAKYQGLHINNRPLVGKNIAILFQKDSTRTRCAFEVAASDLGAGVTYIGPSGSNMGKKESIEDTAKVLGRFYDGIEFRGFAQSDVDALVKYSGVPVWNGLTDDEHPTQIIADFMTMKEKFGNLKNKKIVFIGDYKNNVGVSTMIGAAFNGMHVVMCGPDNYKNEIDKNVLAKCIELFKRNGGSLRFSTDKILAAQDADVIYTDVWVSLGEPFELFDKRIGELKNFQVDMNMIKAAKNDVIFLHCLPAFHDDHTSFSKEVATTLGAKYPIVAKGEMEVTDEVFQSLHNKAFDQAENRMHSIKAIILSTIGY.

Carbamoyl phosphate contacts are provided by residues Ser59–Thr62, Ser83, Arg110, and His137–Gln140. Residues Asn169, Asp235, and Ser239–Leu240 contribute to the L-ornithine site. Carbamoyl phosphate-binding positions include Cys276 to Leu277 and Arg328.

Belongs to the aspartate/ornithine carbamoyltransferase superfamily. OTCase family. As to quaternary structure, dodecamer (tetramer of trimers).

It is found in the cytoplasm. It catalyses the reaction carbamoyl phosphate + L-ornithine = L-citrulline + phosphate + H(+). It functions in the pathway amino-acid degradation; L-arginine degradation via ADI pathway; carbamoyl phosphate from L-arginine: step 2/2. In terms of biological role, nvolved in the catabolism of arginine. Catalyzes the phosphorolysis of citrulline, the reverse reaction of the biosynthetic one, yielding ornithine and carbamoyl phosphate which serve to generate ATP from ADP. The sequence is that of Ornithine carbamoyltransferase, catabolic (arcB) from Malacoplasma penetrans (strain HF-2) (Mycoplasma penetrans).